The chain runs to 230 residues: CRP-like protein Clp (230 aa).

An a nucleoside 3',5'-cyclic phosphate-binding site is contributed by 18–139; sequence PSLALDAGTI…APKILYAIGV (122 aa). The region spanning 158 to 230 is the HTH crp-type domain; it reads LDVTDRIVRT…GKTVVLYGTR (73 aa). A DNA-binding region (H-T-H motif) is located at residues 190–209; it reads RQELARLVGCSREMAGRVLK.

Homodimer.

It localises to the cytoplasm. Allosterically inhibited by cyclic di-GMP (c-di-GMP), which binds to Clp and abolishes its ability to bind its target gene promoter. Its function is as follows. Global transcriptional regulator that regulates virulence factors production by activating or repressing the expression of a large set of genes in diffusible signal factor (DSF) pathway. The chain is CRP-like protein Clp (clp) from Xanthomonas oryzae pv. oryzae (strain MAFF 311018).